Consider the following 98-residue polypeptide: Large ribosomal subunit protein uL23 (98 aa).

The protein belongs to the universal ribosomal protein uL23 family. As to quaternary structure, part of the 50S ribosomal subunit. Contacts protein L29, and trigger factor when it is bound to the ribosome.

Functionally, one of the early assembly proteins it binds 23S rRNA. One of the proteins that surrounds the polypeptide exit tunnel on the outside of the ribosome. Forms the main docking site for trigger factor binding to the ribosome. The polypeptide is Large ribosomal subunit protein uL23 (Borreliella afzelii (strain PKo) (Borrelia afzelii)).